The sequence spans 586 residues: Actin-related protein 9 (586 aa).

The tract at residues Ser141 to Asn169 is disordered.

The protein belongs to the actin family. ARP8 subfamily.

The polypeptide is Actin-related protein 9 (ARP9) (Oryza sativa subsp. japonica (Rice)).